Consider the following 176-residue polypeptide: Jacalin-related lectin 19 (176 aa).

Residues Thr-12–Arg-154 enclose the Jacalin-type lectin domain.

Belongs to the jacalin lectin family.

This Arabidopsis thaliana (Mouse-ear cress) protein is Jacalin-related lectin 19 (JAL19).